We begin with the raw amino-acid sequence, 378 residues long: Flap endonuclease 1 (378 aa).

The interval 1–104 (MGVKDLSKVI…SELEKRTERR (104 aa)) is N-domain. Residue D34 coordinates Mg(2+). DNA is bound by residues R47 and R70. D86 contacts Mg(2+). Positions 90–113 (PQMKTSELEKRTERRTEAEKQRND) are disordered. Residues 95–113 (SELEKRTERRTEAEKQRND) are compositionally biased toward basic and acidic residues. Residues 122-253 (SVNKFEKRLV…KKAFELIKKY (132 aa)) form an I-domain region. Mg(2+) is bound by residues E158, E160, D179, and D181. E158 contributes to the DNA binding site. Positions 231 and 233 each coordinate DNA. D233 contributes to the Mg(2+) binding site. The segment at 336–344 (QQARIDSFF) is interaction with PCNA. The interval 348–378 (KVVTSETTKRKNEEKNNLKKRGPSLGKKAKK) is disordered. The span at 354-364 (TTKRKNEEKNN) shows a compositional bias: basic and acidic residues. The span at 365–378 (LKKRGPSLGKKAKK) shows a compositional bias: basic residues.

Belongs to the XPG/RAD2 endonuclease family. FEN1 subfamily. As to quaternary structure, interacts with PCNA. Three molecules of FEN1 bind to one PCNA trimer with each molecule binding to one PCNA monomer. PCNA stimulates the nuclease activity without altering cleavage specificity. It depends on Mg(2+) as a cofactor. Post-translationally, phosphorylated. Phosphorylation upon DNA damage induces relocalization to the nuclear plasma.

The protein localises to the nucleus. The protein resides in the nucleolus. Its subcellular location is the nucleoplasm. It localises to the mitochondrion. Functionally, structure-specific nuclease with 5'-flap endonuclease and 5'-3' exonuclease activities involved in DNA replication and repair. During DNA replication, cleaves the 5'-overhanging flap structure that is generated by displacement synthesis when DNA polymerase encounters the 5'-end of a downstream Okazaki fragment. It enters the flap from the 5'-end and then tracks to cleave the flap base, leaving a nick for ligation. Also involved in the long patch base excision repair (LP-BER) pathway, by cleaving within the apurinic/apyrimidinic (AP) site-terminated flap. Acts as a genome stabilization factor that prevents flaps from equilibrating into structures that lead to duplications and deletions. Also possesses 5'-3' exonuclease activity on nicked or gapped double-stranded DNA, and exhibits RNase H activity. Also involved in replication and repair of rDNA and in repairing mitochondrial DNA. In Brugia malayi (Filarial nematode worm), this protein is Flap endonuclease 1.